A 593-amino-acid chain; its full sequence is Bifunctional lycopene cyclase/phytoene synthase (593 aa).

The tract at residues 1-242 is lycopene beta-cyclase; that stretch reads MAYDYALVHL…IVFGMAVFDQ (242 aa). 7 helical membrane passes run 8 to 28, 31 to 51, 77 to 97, 117 to 136, 147 to 167, 169 to 189, and 231 to 251; these read VHLK…YPIF, IHFL…LPWD, IEEL…YILL, IARG…LYGV, YLGL…TVAG, FILT…TVYL, and ILIV…FAFP. The tract at residues 249-593 is phytoene synthase; sequence AFPHLFPKVP…KTVLKALFSA (345 aa).

In the N-terminal section; belongs to the lycopene beta-cyclase family. This sequence in the C-terminal section; belongs to the phytoene/squalene synthase family.

The protein localises to the membrane. The enzyme catalyses all-trans-lycopene = gamma-carotene. It catalyses the reaction gamma-carotene = all-trans-beta-carotene. It carries out the reaction 2 (2E,6E,10E)-geranylgeranyl diphosphate = 15-cis-phytoene + 2 diphosphate. It functions in the pathway carotenoid biosynthesis; beta-carotene biosynthesis. The protein operates within carotenoid biosynthesis; phytoene biosynthesis; all-trans-phytoene from geranylgeranyl diphosphate: step 1/1. Bifunctional enzyme that catalyzes the reactions from geranylgeranyl diphosphate to phytoene (phytoene synthase) and lycopene to beta-carotene via the intermediate gamma-carotene (lycopene cyclase). The chain is Bifunctional lycopene cyclase/phytoene synthase from Podospora anserina (strain S / ATCC MYA-4624 / DSM 980 / FGSC 10383) (Pleurage anserina).